Consider the following 187-residue polypeptide: Adenylate kinase (187 aa).

10–15 (GSGKGT) lines the ATP pocket. The interval 30-59 (STGDLLRAEVAAGSPLGVKAKEVMARGDLV) is NMP. Residues T31, R36, 57-59 (DLV), 85-88 (GYPR), and Q92 each bind AMP. Positions 126–136 (GRAKAEGREDD) are LID. R127 is an ATP binding site. Positions 133 and 144 each coordinate AMP. Residue G172 coordinates ATP.

It belongs to the adenylate kinase family. Monomer.

The protein localises to the cytoplasm. It catalyses the reaction AMP + ATP = 2 ADP. It functions in the pathway purine metabolism; AMP biosynthesis via salvage pathway; AMP from ADP: step 1/1. Catalyzes the reversible transfer of the terminal phosphate group between ATP and AMP. Plays an important role in cellular energy homeostasis and in adenine nucleotide metabolism. The sequence is that of Adenylate kinase from Xanthomonas campestris pv. campestris (strain B100).